We begin with the raw amino-acid sequence, 300 residues long: DNA repair protein RecO (300 aa).

Belongs to the RecO family.

Its function is as follows. Involved in DNA repair and RecF pathway recombination. The polypeptide is DNA repair protein RecO (Nostoc punctiforme (strain ATCC 29133 / PCC 73102)).